The chain runs to 459 residues: MVLAMESRVAPEIPGLIQPGNVTQDLKMMVCKLLNSPKPTKTFPGSQPVSFQHSDVEEKLLAHDYYVCEKTDGLRVLMFIVINPVTGEQGCFMIDRENNYYLVNGFRFPRLPQKKKEELLETLQDGTLLDGELVIQTNPMTKLQELRYLMFDCLAINGRCLTQSPTSSRLAHLGKEFFKPYFDLRAAYPNRCTTFPFKISMKHMDFSYQLVKVAKSLDKLPHLSDGLIFTPVKAPYTAGGKDSLLLKWKPEQENTVDFKLILDIPMVEDPSLPKDDRNRWYYNYDVKPVFSLYVWQGGADVNSRLKHFDQPFDRKEFEILERTYRKFAELSVSDEEWQNLKNLEQPLNGRIVECAKNQETGAWEMLRFRDDKLNGNHTSVVQKVLESINDSVSLEDLEEIVGDIKRCWDERRANMAGGSGRPLPSQSQNATLSTSKPVHSQPPSNDKEPKYVDEDDWSD.

Residue lysine 70 is the N6-GMP-lysine intermediate of the active site. Residues methionine 415 to aspartate 459 form a disordered region. Over residues proline 424–serine 444 the composition is skewed to polar residues.

The protein belongs to the eukaryotic GTase family. In terms of assembly, heterodimer. The mRNA-capping enzyme is composed of two separate chains alpha and beta, respectively a mRNA guanylyltransferase and an mRNA 5'-triphosphate monophosphatase.

It is found in the nucleus. The enzyme catalyses a 5'-end diphospho-ribonucleoside in mRNA + GTP + H(+) = a 5'-end (5'-triphosphoguanosine)-ribonucleoside in mRNA + diphosphate. In terms of biological role, second step of mRNA capping. Transfer of the GMP moiety of GTP to the 5'-diphosphate terminus of RNA via a covalent enzyme-GMP reaction intermediate. In Saccharomyces cerevisiae (strain ATCC 204508 / S288c) (Baker's yeast), this protein is mRNA-capping enzyme subunit alpha (CEG1).